The sequence spans 81 residues: Photosystem I iron-sulfur center (81 aa).

2 consecutive 4Fe-4S ferredoxin-type domains span residues 2–31 (SHSV…MIPW) and 39–68 (IASA…VRVY). The [4Fe-4S] cluster site is built by Cys11, Cys14, Cys17, Cys21, Cys48, Cys51, Cys54, and Cys58.

In terms of assembly, the eukaryotic PSI reaction center is composed of at least 11 subunits. [4Fe-4S] cluster is required as a cofactor.

Its subcellular location is the plastid. It is found in the chloroplast thylakoid membrane. The enzyme catalyses reduced [plastocyanin] + hnu + oxidized [2Fe-2S]-[ferredoxin] = oxidized [plastocyanin] + reduced [2Fe-2S]-[ferredoxin]. Functionally, apoprotein for the two 4Fe-4S centers FA and FB of photosystem I (PSI); essential for photochemical activity. FB is the terminal electron acceptor of PSI, donating electrons to ferredoxin. The C-terminus interacts with PsaA/B/D and helps assemble the protein into the PSI complex. Required for binding of PsaD and PsaE to PSI. PSI is a plastocyanin-ferredoxin oxidoreductase, converting photonic excitation into a charge separation, which transfers an electron from the donor P700 chlorophyll pair to the spectroscopically characterized acceptors A0, A1, FX, FA and FB in turn. This chain is Photosystem I iron-sulfur center, found in Phalaenopsis aphrodite subsp. formosana (Moth orchid).